The following is a 150-amino-acid chain: Large ribosomal subunit protein bL9 (150 aa).

The protein belongs to the bacterial ribosomal protein bL9 family.

Functionally, binds to the 23S rRNA. The protein is Large ribosomal subunit protein bL9 of Pediococcus pentosaceus (strain ATCC 25745 / CCUG 21536 / LMG 10740 / 183-1w).